We begin with the raw amino-acid sequence, 151 residues long: Large ribosomal subunit protein bL9 (151 aa).

This sequence belongs to the bacterial ribosomal protein bL9 family.

Its function is as follows. Binds to the 23S rRNA. The protein is Large ribosomal subunit protein bL9 of Chlorobium limicola (strain DSM 245 / NBRC 103803 / 6330).